The primary structure comprises 529 residues: Tyrosine-protein kinase Fgr (529 aa).

G2 carries the N-myristoyl glycine lipid modification. Residues C3 and C6 are each lipidated (S-palmitoyl cysteine). Y34 is modified (phosphotyrosine). Positions I77–S138 constitute an SH3 domain. One can recognise an SH2 domain in the interval W144 to C241. Phosphotyrosine is present on Y208. Phosphoserine is present on S218. A Protein kinase domain is found at I263 to F516. ATP-binding positions include L269–V277 and K291. D382 (proton acceptor) is an active-site residue. Position 412 is a phosphotyrosine (Y412). Y523 is modified (phosphotyrosine; by SRC).

This sequence belongs to the protein kinase superfamily. Tyr protein kinase family. SRC subfamily. As to quaternary structure, interacts with ITGB1, ITGB2, MS4A2/FCER1B, FCER1G, FCGR2A and/or FCGR2B. Interacts (via SH2 domain) with SYK (tyrosine phosphorylated). Interacts (via SH2 domain) with FLT3 (tyrosine phosphorylated). Interacts with PTK2/FAK1. Interacts (via SH2 domain) with HCLS1 (tyrosine phosphorylated by SYK). Interacts with SIRPA and PTPNS1. Interacts (not phosphorylated on tyrosine residues) with CBL; FGR tyrosine phosphorylation promotes dissociation. Interacts with PIK3R1 and FASLG. Interacts with CLNK. Ubiquitinated. Becomes ubiquitinated in response to ITGB2 signaling; this does not lead to degradation. In terms of processing, phosphorylated. Autophosphorylated on tyrosine residues. Becomes phosphorylated in response to FCGR2A and/or FCGR2B engagement, cell adhesion and signaling by ITGB2. Prior phosphorylation at Tyr-523 by SRC inhibits ulterior autophosphorylation at Tyr-412. In terms of tissue distribution, detected in neutrophils, monocytes and natural killer cells (at protein level). Detected in monocytes and large lymphocytes.

It is found in the cell membrane. The protein resides in the cell projection. Its subcellular location is the ruffle membrane. The protein localises to the cytoplasm. It localises to the cytosol. It is found in the cytoskeleton. The protein resides in the mitochondrion inner membrane. Its subcellular location is the mitochondrion intermembrane space. The enzyme catalyses L-tyrosyl-[protein] + ATP = O-phospho-L-tyrosyl-[protein] + ADP + H(+). With respect to regulation, activated by autophosphorylation. Prior phosphorylation at Tyr-523 by SRC inhibits ulterior autophosphorylation at Tyr-412. Activated by phorbol myristate acetate, phosphatidic acid and poly-Lys. Binding (via SH2 domain) of HCLS1 that is already phosphorylated by SYK strongly increases kinase activity. Non-receptor tyrosine-protein kinase that transmits signals from cell surface receptors devoid of kinase activity and contributes to the regulation of immune responses, including neutrophil, monocyte, macrophage and mast cell functions, cytoskeleton remodeling in response to extracellular stimuli, phagocytosis, cell adhesion and migration. Promotes mast cell degranulation, release of inflammatory cytokines and IgE-mediated anaphylaxis. Acts downstream of receptors that bind the Fc region of immunoglobulins, such as MS4A2/FCER1B, FCGR2A and/or FCGR2B. Acts downstream of ITGB1 and ITGB2, and regulates actin cytoskeleton reorganization, cell spreading and adhesion. Depending on the context, activates or inhibits cellular responses. Functions as a negative regulator of ITGB2 signaling, phagocytosis and SYK activity in monocytes. Required for normal ITGB1 and ITGB2 signaling, normal cell spreading and adhesion in neutrophils and macrophages. Functions as a positive regulator of cell migration and regulates cytoskeleton reorganization via RAC1 activation. Phosphorylates SYK (in vitro) and promotes SYK-dependent activation of AKT1 and MAP kinase signaling. Phosphorylates PLD2 in antigen-stimulated mast cells, leading to PLD2 activation and the production of the signaling molecules lysophosphatidic acid and diacylglycerol. Promotes activation of PIK3R1. Phosphorylates FASLG, and thereby regulates its ubiquitination and subsequent internalization. Phosphorylates ABL1. Promotes phosphorylation of CBL, CTTN, PIK3R1, PTK2/FAK1, PTK2B/PYK2 and VAV2. Phosphorylates HCLS1 that has already been phosphorylated by SYK, but not unphosphorylated HCLS1. Together with CLNK, it acts as a negative regulator of natural killer cell-activating receptors and inhibits interferon-gamma production. In Homo sapiens (Human), this protein is Tyrosine-protein kinase Fgr (FGR).